Reading from the N-terminus, the 193-residue chain is Acyl carrier protein phosphodiesterase (193 aa).

The protein belongs to the AcpH family.

It catalyses the reaction holo-[ACP] + H2O = apo-[ACP] + (R)-4'-phosphopantetheine + H(+). Its function is as follows. Converts holo-ACP to apo-ACP by hydrolytic cleavage of the phosphopantetheine prosthetic group from ACP. This is Acyl carrier protein phosphodiesterase from Klebsiella pneumoniae (strain 342).